Reading from the N-terminus, the 239-residue chain is Pyridoxine 5'-phosphate synthase (239 aa).

Position 7 (N7) interacts with 3-amino-2-oxopropyl phosphate. 9–10 (DH) lines the 1-deoxy-D-xylulose 5-phosphate pocket. Residue R18 participates in 3-amino-2-oxopropyl phosphate binding. H43 acts as the Proton acceptor in catalysis. The 1-deoxy-D-xylulose 5-phosphate site is built by R45 and H50. Catalysis depends on E70, which acts as the Proton acceptor. T100 is a binding site for 1-deoxy-D-xylulose 5-phosphate. H191 acts as the Proton donor in catalysis. Residues G192 and 213 to 214 (GH) contribute to the 3-amino-2-oxopropyl phosphate site.

Belongs to the PNP synthase family. As to quaternary structure, homooctamer; tetramer of dimers.

It localises to the cytoplasm. The enzyme catalyses 3-amino-2-oxopropyl phosphate + 1-deoxy-D-xylulose 5-phosphate = pyridoxine 5'-phosphate + phosphate + 2 H2O + H(+). The protein operates within cofactor biosynthesis; pyridoxine 5'-phosphate biosynthesis; pyridoxine 5'-phosphate from D-erythrose 4-phosphate: step 5/5. In terms of biological role, catalyzes the complicated ring closure reaction between the two acyclic compounds 1-deoxy-D-xylulose-5-phosphate (DXP) and 3-amino-2-oxopropyl phosphate (1-amino-acetone-3-phosphate or AAP) to form pyridoxine 5'-phosphate (PNP) and inorganic phosphate. In Syntrophotalea carbinolica (strain DSM 2380 / NBRC 103641 / GraBd1) (Pelobacter carbinolicus), this protein is Pyridoxine 5'-phosphate synthase.